The primary structure comprises 447 residues: Probable glycine dehydrogenase (decarboxylating) subunit 1 (447 aa).

This sequence belongs to the GcvP family. N-terminal subunit subfamily. The glycine cleavage system is composed of four proteins: P, T, L and H. In this organism, the P 'protein' is a heterodimer of two subunits.

It catalyses the reaction N(6)-[(R)-lipoyl]-L-lysyl-[glycine-cleavage complex H protein] + glycine + H(+) = N(6)-[(R)-S(8)-aminomethyldihydrolipoyl]-L-lysyl-[glycine-cleavage complex H protein] + CO2. Its function is as follows. The glycine cleavage system catalyzes the degradation of glycine. The P protein binds the alpha-amino group of glycine through its pyridoxal phosphate cofactor; CO(2) is released and the remaining methylamine moiety is then transferred to the lipoamide cofactor of the H protein. The polypeptide is Probable glycine dehydrogenase (decarboxylating) subunit 1 (Halalkalibacterium halodurans (strain ATCC BAA-125 / DSM 18197 / FERM 7344 / JCM 9153 / C-125) (Bacillus halodurans)).